Here is a 408-residue protein sequence, read N- to C-terminus: DNA-directed RNA polymerase subunit Rpo1C (408 aa).

Belongs to the RNA polymerase beta' chain family. As to quaternary structure, part of the RNA polymerase complex.

It localises to the cytoplasm. It carries out the reaction RNA(n) + a ribonucleoside 5'-triphosphate = RNA(n+1) + diphosphate. Its function is as follows. DNA-dependent RNA polymerase (RNAP) catalyzes the transcription of DNA into RNA using the four ribonucleoside triphosphates as substrates. Forms part of the jaw domain. This chain is DNA-directed RNA polymerase subunit Rpo1C, found in Methanosarcina mazei (strain ATCC BAA-159 / DSM 3647 / Goe1 / Go1 / JCM 11833 / OCM 88) (Methanosarcina frisia).